We begin with the raw amino-acid sequence, 660 residues long: Kinesin-like protein KIF2A (660 aa).

The tract at residues 1 to 140 (MVTSLNEDNE…QQELREKRAQ (140 aa)) is disordered. Residues 1–171 (MVTSLNEDNE…LDYRPLTTAD (171 aa)) are globular. Ser-48 is modified (phosphoserine). 2 positions are modified to phosphothreonine: Thr-51 and Thr-70. Ser-73 bears the Phosphoserine mark. Lys-75 is modified (N6-acetyllysine). The span at 96–106 (LPEQSSSAQQN) shows a compositional bias: polar residues. Residues 113 to 140 (CVKEVEKLQEKREKRRLQQQELREKRAQ) show a composition bias toward basic and acidic residues. Residues 177 to 507 (RICVCVRKRP…LRYANRVKEL (331 aa)) form the Kinesin motor domain. 267–274 (GQTGSGKT) lines the ATP pocket. A coiled-coil region spans residues 614-653 (ATQLEAILEQKIDILTELRDKVKSFRAALQEEEQASKQIN).

The protein belongs to the TRAFAC class myosin-kinesin ATPase superfamily. Kinesin family. MCAK/KIF2 subfamily. As to quaternary structure, interacts with AURKA and PLK1. Interacts with PSRC1. Interacts with MCRS1; the interaction enhances recruitment of KIF2A to the minus ends of spindle microtubules which promotes chromosome alignment.

It is found in the cytoplasm. Its subcellular location is the cytoskeleton. The protein localises to the microtubule organizing center. It localises to the centrosome. The protein resides in the spindle pole. It is found in the spindle. Functionally, plus end-directed microtubule-dependent motor required for normal brain development. May regulate microtubule dynamics during axonal growth. Required for normal progression through mitosis. Required for normal congress of chromosomes at the metaphase plate. Required for normal spindle dynamics during mitosis. Promotes spindle turnover. Implicated in formation of bipolar mitotic spindles. Has microtubule depolymerization activity. The protein is Kinesin-like protein KIF2A (KIF2A) of Bos taurus (Bovine).